Here is a 259-residue protein sequence, read N- to C-terminus: Triosephosphate isomerase (259 aa).

Residue 10–12 (NWK) participates in substrate binding. The active-site Electrophile is the His-102. The Proton acceptor role is filled by Glu-174. Substrate-binding positions include Gly-180, Ser-220, and 241 to 242 (GG).

Belongs to the triosephosphate isomerase family. As to quaternary structure, homodimer.

Its subcellular location is the cytoplasm. It carries out the reaction D-glyceraldehyde 3-phosphate = dihydroxyacetone phosphate. Its pathway is carbohydrate biosynthesis; gluconeogenesis. It participates in carbohydrate degradation; glycolysis; D-glyceraldehyde 3-phosphate from glycerone phosphate: step 1/1. Involved in the gluconeogenesis. Catalyzes stereospecifically the conversion of dihydroxyacetone phosphate (DHAP) to D-glyceraldehyde-3-phosphate (G3P). The polypeptide is Triosephosphate isomerase (Cutibacterium acnes (strain DSM 16379 / KPA171202) (Propionibacterium acnes)).